The chain runs to 229 residues: MAAGAFILGSTGLCGYQMLRFAEKSSLFDKISTVGRKLPDFKSEKVHLIQEADSDKWPEIIEKEAKGYSTFFSGLGSTIGAAGSAENFERIDYGINYAAAKAAKKAGVQTFVLISAPLSNANSRFLYIRTKGKLEDDIIALKFARTIILRPGILLGEREKFRSITESIIVGISKYTHGNFLSALTVPAYGEEMGQIAVNLASEPIPQSQTEPIVNIISAKQITNLAKKL.

Residues M1–K45 constitute a mitochondrion transit peptide.

This sequence belongs to the FMP52 family.

The protein localises to the mitochondrion outer membrane. This is Protein FMP52-2, mitochondrial (FMP522) from Scheffersomyces stipitis (strain ATCC 58785 / CBS 6054 / NBRC 10063 / NRRL Y-11545) (Yeast).